Here is a 140-residue protein sequence, read N- to C-terminus: MAAMTYHLDVVSAEKKMFSGVVQKIQVTGSEGELGIFPGHAPLLTAIKPGMIRIVKQFGEEEFIYLSGGILEVQPSVVIVLADTAIRGTDLDEAKALESKRKAEEHINNSHGDVDYAQASAELAKAIAKLRVIELTRKAM.

This sequence belongs to the ATPase epsilon chain family. F-type ATPases have 2 components, CF(1) - the catalytic core - and CF(0) - the membrane proton channel. CF(1) has five subunits: alpha(3), beta(3), gamma(1), delta(1), epsilon(1). CF(0) has three main subunits: a, b and c.

It is found in the cell inner membrane. Produces ATP from ADP in the presence of a proton gradient across the membrane. The sequence is that of ATP synthase epsilon chain from Yersinia enterocolitica serotype O:8 / biotype 1B (strain NCTC 13174 / 8081).